The chain runs to 202 residues: Probable host range protein 2-2 (202 aa).

This sequence belongs to the poxviridae C7 protein family.

Its function is as follows. Plays a role for multiplication of the virus in different cell types. The chain is Probable host range protein 2-2 from Oryctolagus cuniculus (Rabbit).